Consider the following 354-residue polypeptide: Probable L-ascorbate-6-phosphate lactonase UlaG (354 aa).

Belongs to the UlaG family. A divalent metal cation is required as a cofactor.

The protein localises to the cytoplasm. It carries out the reaction L-ascorbate 6-phosphate + H2O = 3-dehydro-L-gulonate 6-phosphate. Its pathway is cofactor degradation; L-ascorbate degradation; D-xylulose 5-phosphate from L-ascorbate: step 1/4. In terms of biological role, probably catalyzes the hydrolysis of L-ascorbate-6-P into 3-keto-L-gulonate-6-P. Is essential for L-ascorbate utilization under anaerobic conditions. In Salmonella heidelberg (strain SL476), this protein is Probable L-ascorbate-6-phosphate lactonase UlaG.